The following is a 293-amino-acid chain: Autophagy-related protein 36 (293 aa).

2 stretches are compositionally biased toward polar residues: residues 98–108 (ISSDSNKNSPP) and 260–273 (GETL…ASSS). Disordered regions lie at residues 98–121 (ISSD…NIRS) and 250–273 (SRSR…ASSS).

In terms of assembly, interacts with PEX3, ATG8 and ATG11.

The protein resides in the peroxisome. Functionally, required for autophagic breakdown of peroxisomes, called pexophagy, through linking peroxisomes to the autophagy apparatus. Involved in regulation of the glyoxylate cycle. The protein is Autophagy-related protein 36 (ATG36) of Saccharomyces cerevisiae (strain ATCC 204508 / S288c) (Baker's yeast).